The chain runs to 637 residues: tRNA 5-methylaminomethyl-2-thiouridine biosynthesis bifunctional protein MnmC (637 aa).

The tract at residues 1–20 (MSERIEWLEDGTAGGSPYSP) is disordered. Residues 1–232 (MSERIEWLED…KRDNLQGEYQ (232 aa)) are tRNA (mnm(5)s(2)U34)-methyltransferase. The segment at 255–637 (IGAGLAGSAV…YATRLQPSGS (383 aa)) is FAD-dependent cmnm(5)s(2)U34 oxidoreductase.

The protein in the N-terminal section; belongs to the methyltransferase superfamily. tRNA (mnm(5)s(2)U34)-methyltransferase family. In the C-terminal section; belongs to the DAO family. FAD is required as a cofactor.

It localises to the cytoplasm. The enzyme catalyses 5-aminomethyl-2-thiouridine(34) in tRNA + S-adenosyl-L-methionine = 5-methylaminomethyl-2-thiouridine(34) in tRNA + S-adenosyl-L-homocysteine + H(+). Functionally, catalyzes the last two steps in the biosynthesis of 5-methylaminomethyl-2-thiouridine (mnm(5)s(2)U) at the wobble position (U34) in tRNA. Catalyzes the FAD-dependent demodification of cmnm(5)s(2)U34 to nm(5)s(2)U34, followed by the transfer of a methyl group from S-adenosyl-L-methionine to nm(5)s(2)U34, to form mnm(5)s(2)U34. The chain is tRNA 5-methylaminomethyl-2-thiouridine biosynthesis bifunctional protein MnmC from Polaromonas naphthalenivorans (strain CJ2).